The sequence spans 240 residues: MVNSRETLDLTTFVGPAGNAVDWRISDSRVDYAAALAFMEARAAAIAAGEAPELVWLLEHPPVYTSGTSGKPEDLRDPRFPLVPTGRGGQVTYHGPGQRVAYVMLDLKRRRPDVRAYVAALEEMIIRTLDAFNVRGERREDRVGVWVRRPDKGEGYEDKIAAIGVRLKRWVSFHGIAINVEPDLTHFQAIVPCGVTDPRYGVTSLVDLGLPVTLTDVDLALRQAFESVFGATRASLPETA.

The BPL/LPL catalytic domain maps to 49 to 233; the sequence is GEAPELVWLL…AFESVFGATR (185 aa). Residues 87–94, 162–164, and 175–177 each bind substrate; these read RGGQVTYH, AIG, and GIA. The active-site Acyl-thioester intermediate is C193.

The protein belongs to the LipB family.

It localises to the cytoplasm. It catalyses the reaction octanoyl-[ACP] + L-lysyl-[protein] = N(6)-octanoyl-L-lysyl-[protein] + holo-[ACP] + H(+). It functions in the pathway protein modification; protein lipoylation via endogenous pathway; protein N(6)-(lipoyl)lysine from octanoyl-[acyl-carrier-protein]: step 1/2. Its function is as follows. Catalyzes the transfer of endogenously produced octanoic acid from octanoyl-acyl-carrier-protein onto the lipoyl domains of lipoate-dependent enzymes. Lipoyl-ACP can also act as a substrate although octanoyl-ACP is likely to be the physiological substrate. The sequence is that of Octanoyltransferase from Bradyrhizobium sp. (strain BTAi1 / ATCC BAA-1182).